Reading from the N-terminus, the 749-residue chain is MLANALRLVSNSKKIKYDYDIQKENSVQVGPWTVYSASKKGTNEEVSVFTFDKKNLSTLLKRGSIDSNLKTNYVLELLRKDVSSLSRLRHPSLLQVVEPLEESKSSMSFVTRRIQSMLQDFIKSSNGGFSNYGSSANGKSSGNALEEVEIQKGLLQIIDGLVFLHGSAKVIHYNIRPSSVVVDAKGDWKLCGFSFSQSVESARYEFNDYDFGIPSSLQQSMDFLAPEYITHEIAGPESDVFSFGCLIYSIFNKNQSIINANNHLLSYEKEITSLNSPTFIESKNLPSENLKSLLKETLAVDPKQRASMFELERSPYFTGSAIAALRFLESFPEKLPSEKVSFMESLSKNLTTFPYRIQSQKILPTLLDHLNDQKLVPSLLPCIFEISKGLDSSIFSSKVFTAIFPIISAANSYPERVPLCIFQYMDCLKSKLPSGEFLSKIVPFIYGCFENSSLNVQTTSIQILGTLLDIIDVTTVKSSICPKLYHSFSVTNQLDVKVAILDTFNVFINQKFLDSFAIVDKLLPVLEKVKTREPTVVMGMVTVYISAGAIIPEETVHEQVIPRLWILSVSPSLSLEQYNKCMREIRSLSDAVQKSHAKKLQSKPSSVVPNRITTDPFSSQTKEATSKPSSISPNKATTNIFTSQASLSSQGVARETSSASSYRSYSQRASTPAVTAKSSFHYATPTSGLSNFNSVTPSSSASLYPPLIPSEARTPSVQPANRRVTTPVVNQNTVTSDSSNDLGGWKSLL.

The Protein kinase domain occupies 21 to 317 (IQKENSVQVG…MFELERSPYF (297 aa)). Disordered regions lie at residues 598-677 (KKLQ…VTAK) and 706-749 (PLIP…KSLL). The span at 602 to 651 (SKPSSVVPNRITTDPFSSQTKEATSKPSSISPNKATTNIFTSQASLSSQG) shows a compositional bias: polar residues. At S632 the chain carries Phosphoserine. Low complexity-rich tracts occupy residues 657–670 (SSAS…QRAS) and 721–735 (NRRV…NTVT).

It localises to the cytoplasm. This chain is Protein kinase domain-containing protein ppk32 (ppk32), found in Schizosaccharomyces pombe (strain 972 / ATCC 24843) (Fission yeast).